Consider the following 967-residue polypeptide: Kinesin-like protein KIF28P (967 aa).

Positions 7–355 (DSVKAVRVRP…LRYAERERKI (349 aa)) constitute a Kinesin motor domain. An ATP-binding site is contributed by 111–118 (GQTGSGKS). Positions 410 to 472 (APCPRPALSP…LQHLDRLILG (63 aa)) constitute an FHA domain. Positions 822-851 (NQIPELYLKLLKLEQETEPLRNINRALREE) form a coiled coil.

This sequence belongs to the TRAFAC class myosin-kinesin ATPase superfamily. Kinesin family.

The protein resides in the mitochondrion membrane. Its function is as follows. Microtubule-dependent motor protein required for mitochondrion morphology and transport of mitochondria in neuronal cells. In Homo sapiens (Human), this protein is Kinesin-like protein KIF28P (KIF28P).